The sequence spans 232 residues: Phosphatidylserine decarboxylase proenzyme (232 aa).

The active-site Schiff-base intermediate with substrate; via pyruvic acid is Ser190. Pyruvic acid (Ser); by autocatalysis is present on Ser190.

It belongs to the phosphatidylserine decarboxylase family. PSD-A subfamily. In terms of assembly, heterodimer of a large membrane-associated beta subunit and a small pyruvoyl-containing alpha subunit. Pyruvate is required as a cofactor. Post-translationally, is synthesized initially as an inactive proenzyme. Formation of the active enzyme involves a self-maturation process in which the active site pyruvoyl group is generated from an internal serine residue via an autocatalytic post-translational modification. Two non-identical subunits are generated from the proenzyme in this reaction, and the pyruvate is formed at the N-terminus of the alpha chain, which is derived from the carboxyl end of the proenzyme. The post-translation cleavage follows an unusual pathway, termed non-hydrolytic serinolysis, in which the side chain hydroxyl group of the serine supplies its oxygen atom to form the C-terminus of the beta chain, while the remainder of the serine residue undergoes an oxidative deamination to produce ammonia and the pyruvoyl prosthetic group on the alpha chain.

Its subcellular location is the cell membrane. It catalyses the reaction a 1,2-diacyl-sn-glycero-3-phospho-L-serine + H(+) = a 1,2-diacyl-sn-glycero-3-phosphoethanolamine + CO2. Its pathway is phospholipid metabolism; phosphatidylethanolamine biosynthesis; phosphatidylethanolamine from CDP-diacylglycerol: step 2/2. Its function is as follows. Catalyzes the formation of phosphatidylethanolamine (PtdEtn) from phosphatidylserine (PtdSer). This Bradyrhizobium sp. (strain BTAi1 / ATCC BAA-1182) protein is Phosphatidylserine decarboxylase proenzyme.